The primary structure comprises 285 residues: MTPRLSFHKYQGLGNDFILVDNRWQSQPCLSPEEAVALCNRRFGVGADGVIFLLPGQEGADFSMRLFNSDGSEAEMCGNGIRCLARFLQDLGIPGRDGAYQIHTLAGRIVPQVRADGLVTVDMGIPRLLAKQIPTTLVEPDEKVIRQPLAVAGREWRVTAVSMGNPHCVVFLEEEGSLEELDLAAVGPLFEHHPAFPERTNTEFVQVLSPTRLRLRVWERGAGATLACGTGACAVLVAAVLEERAESQATVELPGGNLEIRWDPSTQHVWMTGPALHVFSGTTAG.

Substrate contacts are provided by N15 and N68. The active-site Proton donor is C77. Substrate-binding positions include 78–79, N165, N201, and 219–220; these read GN and ER. Catalysis depends on C228, which acts as the Proton acceptor. 229-230 serves as a coordination point for substrate; the sequence is GT.

The protein belongs to the diaminopimelate epimerase family. As to quaternary structure, homodimer.

It is found in the cytoplasm. It carries out the reaction (2S,6S)-2,6-diaminopimelate = meso-2,6-diaminopimelate. It functions in the pathway amino-acid biosynthesis; L-lysine biosynthesis via DAP pathway; DL-2,6-diaminopimelate from LL-2,6-diaminopimelate: step 1/1. Functionally, catalyzes the stereoinversion of LL-2,6-diaminopimelate (L,L-DAP) to meso-diaminopimelate (meso-DAP), a precursor of L-lysine and an essential component of the bacterial peptidoglycan. The sequence is that of Diaminopimelate epimerase from Synechococcus sp. (strain JA-2-3B'a(2-13)) (Cyanobacteria bacterium Yellowstone B-Prime).